The primary structure comprises 155 residues: Endoribonuclease YbeY (155 aa).

H114, H118, and H124 together coordinate Zn(2+).

Belongs to the endoribonuclease YbeY family. Zn(2+) serves as cofactor.

Its subcellular location is the cytoplasm. In terms of biological role, single strand-specific metallo-endoribonuclease involved in late-stage 70S ribosome quality control and in maturation of the 3' terminus of the 16S rRNA. The polypeptide is Endoribonuclease YbeY (Photorhabdus laumondii subsp. laumondii (strain DSM 15139 / CIP 105565 / TT01) (Photorhabdus luminescens subsp. laumondii)).